The following is a 322-amino-acid chain: HPr kinase/phosphorylase (322 aa).

Active-site residues include His143 and Lys164. An ATP-binding site is contributed by 158-165 (GRSGVGKS). Residue Ser165 coordinates Mg(2+). Asp182 (proton acceptor; for phosphorylation activity. Proton donor; for dephosphorylation activity) is an active-site residue. An important for the catalytic mechanism of both phosphorylation and dephosphorylation region spans residues 206–215 (MEIRGLGILN). Glu207 is a Mg(2+) binding site. Arg250 is an active-site residue. The tract at residues 271–276 (PVKPGR) is important for the catalytic mechanism of dephosphorylation.

It belongs to the HPrK/P family. Homohexamer. Mg(2+) serves as cofactor.

It catalyses the reaction [HPr protein]-L-serine + ATP = [HPr protein]-O-phospho-L-serine + ADP + H(+). The catalysed reaction is [HPr protein]-O-phospho-L-serine + phosphate + H(+) = [HPr protein]-L-serine + diphosphate. Functionally, catalyzes the ATP- as well as the pyrophosphate-dependent phosphorylation of a specific serine residue in HPr, a phosphocarrier protein of the phosphoenolpyruvate-dependent sugar phosphotransferase system (PTS). HprK/P also catalyzes the pyrophosphate-producing, inorganic phosphate-dependent dephosphorylation (phosphorolysis) of seryl-phosphorylated HPr (P-Ser-HPr). This is HPr kinase/phosphorylase from Leptospira biflexa serovar Patoc (strain Patoc 1 / Ames).